Here is a 359-residue protein sequence, read N- to C-terminus: GATA-binding factor 1-A (359 aa).

Residues Met1–Ala21 form a disordered region. GATA-type zinc fingers lie at residues Cys178–Cys202 and Cys232–Cys256. Disordered stretches follow at residues Met271–Pro311 and Pro323–Pro359. The segment covering Arg279 to Lys291 has biased composition (basic residues).

As to expression, expressed in the developing ventral blood island, and in both tadpole and adult erythrocytes.

The protein localises to the nucleus. Its function is as follows. Transcription factor that acts synergistically with tal1/scl and lmo2 to specify embryonic dorsal mesoderm to a hematopoietic fate. This is GATA-binding factor 1-A (gata1-a) from Xenopus laevis (African clawed frog).